The primary structure comprises 618 residues: uncharacterized protein (618 aa).

Residues 1–45 (MSSKSASKLKREAKKAERLAAKGESVKPSKKNGTKNGKDKEVDGV) form a disordered region. 2 stretches are compositionally biased toward basic and acidic residues: residues 14 to 27 (KKAE…ESVK) and 36 to 45 (NGKDKEVDGV). A phosphoserine mark is found at serine 50 and serine 53. Threonine 54 carries the post-translational modification Phosphothreonine. Serine 55 and serine 64 each carry phosphoserine. ABC transporter domains lie at 76–325 (IKID…LKQQ) and 388–609 (IAFN…QSRD). ATP contacts are provided by residues 108-115 (GDNGSGKS) and 423-430 (GKNGTGKS).

The protein belongs to the ABC transporter superfamily.

The protein resides in the cytoplasm. This is an uncharacterized protein from Schizosaccharomyces pombe (strain 972 / ATCC 24843) (Fission yeast).